The following is a 503-amino-acid chain: UDP-N-acetylmuramoylalanine--D-glutamate ligase (503 aa).

129–135 (GTNGKTT) contributes to the ATP binding site.

It belongs to the MurCDEF family.

It localises to the cytoplasm. It catalyses the reaction UDP-N-acetyl-alpha-D-muramoyl-L-alanine + D-glutamate + ATP = UDP-N-acetyl-alpha-D-muramoyl-L-alanyl-D-glutamate + ADP + phosphate + H(+). The protein operates within cell wall biogenesis; peptidoglycan biosynthesis. In terms of biological role, cell wall formation. Catalyzes the addition of glutamate to the nucleotide precursor UDP-N-acetylmuramoyl-L-alanine (UMA). The polypeptide is UDP-N-acetylmuramoylalanine--D-glutamate ligase (Burkholderia cenocepacia (strain HI2424)).